We begin with the raw amino-acid sequence, 1343 residues long: MVYSYSEKKRIRKDFGKRPQVLDIPYLLSIQLDSFKKFTDQDPTGERGFEAAFRSVFPIKSFSGNSELQYVSYKLGEPVFDVKECQIRGVTYSAPLRVKLRMVLYDREAAPGTVKDIKEQEVYMGDIPMMTDNGTFVINGTERVIVSQLHRSPGVFFDHDRGKTHSSGKVLYNARIIPYRGSWLDFEFDPKDALFVRIDRRRKLAASIILRALDYSTQDILDLFFDRVNFKIKKDSLVMDLVAERLRGETASYDIKDSEGSILVEKGRRITARHIRQLEKTNTTELEVPVDYISGKISGQDYIDPDTGEVLVSANAEISLEDLAKLSLAGIKEISTLYINELDNGAYMSDTLRIDSTTNRLEALVEIYRMMRPGEPPTKDAAEALFQNLFFSEERYDLSKVGRMKFNRRLSIDDDEGTGILSKEDIVAVMKNIITIRNGNDEVDDIDHLGNRRIRSVGEMAENQFRVGLVRVERAVRERLSLGDLNELMPQDLINAKPISAAVKEFFGSSQLSQFMDQNNPLSEVTHKRRISALGPGGLTRERAGFEVRDVHPTHYGRLCPIETPEGPNIGLINSLASFARTNSYGFLETPYRKVIDGVVTDQVDYLSAIEEGRYVIAQAIVDLDADGRMMDELIACRHKGDSTFMGAGDIQYMDVSPQQIISVAASLIPFLEHDDANRALMGANMQRQAVPTLKADKPLVGTGIERTLAVDSGVVVAAKRGGYVDYVDASRIVVKVNESELTPGEAGIDIYNLTKYTRSNQNTCINQRPCCSMGDPVVRGDVLADGPSTDLGDLALGQNMRIAFMPWNGYNFEDSILISERVAMEDRFTTIHIQELSCIARDTKLGSEEITADIPNVGESALSKLDESGIVYIGAEVKGGDILVGKVTPKGETQLTPEEKLLRAIFGEKASDVKDSSLRVPNSVKGTIIDVQVFTRDGVEKDKRAVEIEEMHVGQAKKDLSEEFQILEEGVYGRARNLLLNAGFTEDQLATIPRSQLLVQTIDDEAKQTELEQLAEQHDELKADFDKKFEIKRRKITQGDDLAPGVLKIVKVYLAVKRTIQPGDKMAGRHGNKGVISKINPVEDMPYDENGNPIDIVLNPLGVPSRMNIGQVLEVHMGAAAKGIGDRITAMLEEQRELAELRGYIKEVYELGEEVQQRVDIDSFTDDEVLRLAKNLKGGVPTATPAFDGAKEKEIKEMLALAGLPTSGQRRLFDGRTGDEFERQVTVGYMYMLKLNHLVDDKMHARSTGSYSLVTQQPLGGKAQFGGQRFGEMEVWALEAYGAAYTLQEMLTVKSDDVNGRTHMYKNIVDGNHQMQPGMPESFNVLLKEIRSLGINIELDQD.

This sequence belongs to the RNA polymerase beta chain family. The RNAP catalytic core consists of 2 alpha, 1 beta, 1 beta' and 1 omega subunit. When a sigma factor is associated with the core the holoenzyme is formed, which can initiate transcription.

It catalyses the reaction RNA(n) + a ribonucleoside 5'-triphosphate = RNA(n+1) + diphosphate. Its function is as follows. DNA-dependent RNA polymerase catalyzes the transcription of DNA into RNA using the four ribonucleoside triphosphates as substrates. In Shewanella sediminis (strain HAW-EB3), this protein is DNA-directed RNA polymerase subunit beta.